Reading from the N-terminus, the 343-residue chain is Signal peptide peptidase 1 (343 aa).

Residues 1 to 19 (MKTHERAANLALAGLSLAP) lie on the Lumenal side of the membrane. A helical membrane pass occupies residues 20–40 (LVVKVEPNVNVILTACLAVYV). The Cytoplasmic portion of the chain corresponds to 41–62 (GCYRSVKPTPPSETMSKEHAMR). The helical transmembrane segment at 63-83 (FPLVGSAMLLSLFLLFKFLSK) threads the bilayer. Residues 84 to 87 (DLVN) are Lumenal-facing. The chain crosses the membrane as a helical span at residues 88–108 (AVLTAYFFILGIAALCATLLP). Over 109-136 (SIKRFLPKEWNDNAIVWCAPFFHSLSVE) the chain is Cytoplasmic. A helical membrane pass occupies residues 137 to 157 (FTKSQVVASIPGFFFCIWYAA). Residues 158 to 160 (KKH) are Lumenal-facing. Residues 161–181 (WLANNVLGISFCIQGIEMLSL) form a helical membrane-spanning segment. The Cytoplasmic portion of the chain corresponds to 182 to 188 (GSFKTGA). Residues 189–209 (ILLAGLFFYDIFWVFFTPVMV) form a helical membrane-spanning segment. The active site involves Asp-198. Residues 210-230 (SVAKSFDAPIKLLFPTGDAAR) are Lumenal-facing. Residues 231–251 (PFSMLGLGDIVIPGIFVALAL) traverse the membrane as a helical segment. Asp-239 is a catalytic residue. Residues 252-266 (RFDVSRGIKNRYFNS) are Cytoplasmic-facing. The chain crosses the membrane as a helical span at residues 267 to 287 (AFLGYTVGLTVTIIVMNWFQA). The Lumenal segment spans residues 288–290 (AQP). Residues 290-292 (PAL) carry the PAL motif. A helical membrane pass occupies residues 291–311 (ALLYIVPGVIGFVAVHCLWNG). Over 312–343 (EVKPLLEYNESKAEEEDAVEEDTDSKQNKKEE) the chain is Cytoplasmic. A disordered region spans residues 322–343 (SKAEEEDAVEEDTDSKQNKKEE). Over residues 324 to 334 (AEEEDAVEEDT) the composition is skewed to acidic residues. The Endoplasmic reticulum targeting signal motif lies at 340–343 (KKEE).

Belongs to the peptidase A22B family. As to expression, ubiquitous.

The protein resides in the endoplasmic reticulum membrane. In terms of biological role, intramembrane-cleaving aspartic protease (I-CLiP) that cleaves type II membrane signal peptides in the hydrophobic plane of the membrane. Catalyzes intramembrane proteolysis of some signal peptides after they have been cleaved from a preprotein, resulting in the release of the fragment from the ER membrane into the cytoplasm. This chain is Signal peptide peptidase 1 (SPP1), found in Oryza sativa subsp. japonica (Rice).